We begin with the raw amino-acid sequence, 554 residues long: CTP synthase (554 aa).

Residues M1–I270 are amidoligase domain. S13 contacts CTP. S13 is a binding site for UTP. ATP contacts are provided by residues S14–I19 and D71. 2 residues coordinate Mg(2+): D71 and E144. Residues D151 to E153, K191 to Q196, and K227 contribute to the CTP site. Residues K191 to Q196 and K227 contribute to the UTP site. A Glutamine amidotransferase type-1 domain is found at T295–R547. G356 is an L-glutamine binding site. C383 serves as the catalytic Nucleophile; for glutamine hydrolysis. Residues L384–Q387, E407, and R473 contribute to the L-glutamine site. Active-site residues include H520 and E522.

This sequence belongs to the CTP synthase family. Homotetramer.

It catalyses the reaction UTP + L-glutamine + ATP + H2O = CTP + L-glutamate + ADP + phosphate + 2 H(+). It carries out the reaction L-glutamine + H2O = L-glutamate + NH4(+). The enzyme catalyses UTP + NH4(+) + ATP = CTP + ADP + phosphate + 2 H(+). Its pathway is pyrimidine metabolism; CTP biosynthesis via de novo pathway; CTP from UDP: step 2/2. With respect to regulation, allosterically activated by GTP, when glutamine is the substrate; GTP has no effect on the reaction when ammonia is the substrate. The allosteric effector GTP functions by stabilizing the protein conformation that binds the tetrahedral intermediate(s) formed during glutamine hydrolysis. Inhibited by the product CTP, via allosteric rather than competitive inhibition. Functionally, catalyzes the ATP-dependent amination of UTP to CTP with either L-glutamine or ammonia as the source of nitrogen. Regulates intracellular CTP levels through interactions with the four ribonucleotide triphosphates. The chain is CTP synthase from Ralstonia nicotianae (strain ATCC BAA-1114 / GMI1000) (Ralstonia solanacearum).